We begin with the raw amino-acid sequence, 103 residues long: Small ribosomal subunit protein uS10 (103 aa).

The protein belongs to the universal ribosomal protein uS10 family. In terms of assembly, part of the 30S ribosomal subunit.

Involved in the binding of tRNA to the ribosomes. The sequence is that of Small ribosomal subunit protein uS10 from Colwellia psychrerythraea (strain 34H / ATCC BAA-681) (Vibrio psychroerythus).